The primary structure comprises 541 residues: 2-isopropylmalate synthase (541 aa).

A Pyruvate carboxyltransferase domain is found at 8 to 284 (VIIFDTTLRD…LTNINTRHIY (277 aa)). Mn(2+)-binding residues include Asp17, His208, His210, and Asn244. Residues 408–541 (RLELVQVSCG…DQPTEVVAGS (134 aa)) form a regulatory domain region.

It belongs to the alpha-IPM synthase/homocitrate synthase family. LeuA type 1 subfamily. In terms of assembly, homodimer. The cofactor is Mn(2+).

The protein resides in the cytoplasm. It carries out the reaction 3-methyl-2-oxobutanoate + acetyl-CoA + H2O = (2S)-2-isopropylmalate + CoA + H(+). Its pathway is amino-acid biosynthesis; L-leucine biosynthesis; L-leucine from 3-methyl-2-oxobutanoate: step 1/4. Its function is as follows. Catalyzes the condensation of the acetyl group of acetyl-CoA with 3-methyl-2-oxobutanoate (2-ketoisovalerate) to form 3-carboxy-3-hydroxy-4-methylpentanoate (2-isopropylmalate). The sequence is that of 2-isopropylmalate synthase from Trichodesmium erythraeum (strain IMS101).